Consider the following 157-residue polypeptide: 3-dehydroquinate dehydratase (157 aa).

The active-site Proton acceptor is the Tyr-22. The substrate site is built by Asn-73, His-79, and Asp-86. His-99 (proton donor) is an active-site residue. Substrate contacts are provided by residues 100-101 (LS) and Arg-110.

The protein belongs to the type-II 3-dehydroquinase family. In terms of assembly, homododecamer.

The enzyme catalyses 3-dehydroquinate = 3-dehydroshikimate + H2O. The protein operates within metabolic intermediate biosynthesis; chorismate biosynthesis; chorismate from D-erythrose 4-phosphate and phosphoenolpyruvate: step 3/7. Functionally, catalyzes a trans-dehydration via an enolate intermediate. The sequence is that of 3-dehydroquinate dehydratase from Roseiflexus castenholzii (strain DSM 13941 / HLO8).